The primary structure comprises 61 residues: Small ribosomal subunit protein uS14 (61 aa).

Zn(2+) contacts are provided by Cys24, Cys27, Cys40, and Cys43.

This sequence belongs to the universal ribosomal protein uS14 family. Zinc-binding uS14 subfamily. As to quaternary structure, part of the 30S ribosomal subunit. Contacts proteins S3 and S10. It depends on Zn(2+) as a cofactor.

Binds 16S rRNA, required for the assembly of 30S particles and may also be responsible for determining the conformation of the 16S rRNA at the A site. In Campylobacter jejuni subsp. jejuni serotype O:6 (strain 81116 / NCTC 11828), this protein is Small ribosomal subunit protein uS14.